The primary structure comprises 184 residues: ATP synthase subunit delta (184 aa).

The protein belongs to the ATPase delta chain family. In terms of assembly, F-type ATPases have 2 components, F(1) - the catalytic core - and F(0) - the membrane proton channel. F(1) has five subunits: alpha(3), beta(3), gamma(1), delta(1), epsilon(1). F(0) has three main subunits: a(1), b(2) and c(10-14). The alpha and beta chains form an alternating ring which encloses part of the gamma chain. F(1) is attached to F(0) by a central stalk formed by the gamma and epsilon chains, while a peripheral stalk is formed by the delta and b chains.

The protein localises to the cell inner membrane. Its function is as follows. F(1)F(0) ATP synthase produces ATP from ADP in the presence of a proton or sodium gradient. F-type ATPases consist of two structural domains, F(1) containing the extramembraneous catalytic core and F(0) containing the membrane proton channel, linked together by a central stalk and a peripheral stalk. During catalysis, ATP synthesis in the catalytic domain of F(1) is coupled via a rotary mechanism of the central stalk subunits to proton translocation. In terms of biological role, this protein is part of the stalk that links CF(0) to CF(1). It either transmits conformational changes from CF(0) to CF(1) or is implicated in proton conduction. The chain is ATP synthase subunit delta from Magnetococcus marinus (strain ATCC BAA-1437 / JCM 17883 / MC-1).